Reading from the N-terminus, the 93-residue chain is Non-histone chromosomal protein 6A (93 aa).

Disordered regions lie at residues 1-23 (MVTPREPKKRTTRKKKDPNAPKR) and 69-93 (PYEAKAQADKKRYESEKELYNATLA). A compositionally biased stretch (basic residues) spans 7-16 (PKKRTTRKKK). The segment at residues 21 to 89 (PKRALSAYMF…RYESEKELYN (69 aa)) is a DNA-binding region (HMG box). Residues 69 to 87 (PYEAKAQADKKRYESEKEL) are compositionally biased toward basic and acidic residues.

The protein belongs to the NHP6 family. In terms of assembly, weakly associates with the stable SPT16-POB3 heterodimer to form the FACT (yFACT or SNP) complex, which is associated with nucleosomes. Multiple molecules of NHP6 (NHP6A and/or NHP6B) are required to recruit the SPT16-POB3 heterodimer to DNA.

The protein resides in the nucleus. The protein localises to the chromosome. Functionally, DNA-binding protein that induces severe bending of DNA. Required for DNA-binding by the FACT complex, a general chromatin factor that acts to reorganize nucleosomes. The FACT complex is involved in multiple processes that require DNA as a template such as mRNA elongation, DNA replication and DNA repair. Also augments the fidelity of transcription by RNA polymerase III independently of any role in the FACT complex. Required for transcriptional initiation fidelity of some but not all tRNA genes. Seems to be functionally redundant with NHP6B. In Saccharomyces cerevisiae (strain ATCC 204508 / S288c) (Baker's yeast), this protein is Non-histone chromosomal protein 6A (NHP6A).